Reading from the N-terminus, the 633-residue chain is Electron transfer flavoprotein-ubiquinone oxidoreductase, mitochondrial (633 aa).

The N-terminal 90 residues, 1-90 (MHRFLVKLSS…NGITSSRCIS (90 aa)), are a transit peptide targeting the mitochondrion. An FAD-binding site is contributed by 102-116 (VLIVGAGPAGLSAAI). The stretch at 140–161 (VGGHIISGNVFEPLALDELLPH) is an intramembrane region. A ubiquinone contacts are provided by Gly-334 and Gly-335. The stretch at 401-421 (IPYPVFPGGAIIGCSAGFLNV) is an intramembrane region. 4 residues coordinate [4Fe-4S] cluster: Cys-578, Cys-602, Cys-605, and Cys-608. A 4Fe-4S ferredoxin-type domain is found at 593 to 622 (PKLQINAQNCLHCKACDIKDPKQNIEWTVP).

Belongs to the ETF-QO/FixC family. It depends on [4Fe-4S] cluster as a cofactor. The cofactor is FAD.

Its subcellular location is the mitochondrion inner membrane. It carries out the reaction a ubiquinone + reduced [electron-transfer flavoprotein] = a ubiquinol + oxidized [electron-transfer flavoprotein] + H(+). Up-regulated by KIN10, by S1-bZIP specific dimers, and also by C/S1 bZIP heterodimers. Accepts electrons from ETF and reduces ubiquinone. May act downstream of IVD and D2HGDH in the degradation of phytol or chlorophyll during dark-induced senescence and sugar starvation. The protein is Electron transfer flavoprotein-ubiquinone oxidoreductase, mitochondrial (ETFQO) of Arabidopsis thaliana (Mouse-ear cress).